The following is a 169-amino-acid chain: MPLLDSFTVDHTRMNAPAVRVAKHMSTPKGDAITVFDLRFCAPNKDILSERGIHTLEHLFAGFMRDHLNGSNVEIIDISPMGCRTGFYMSLIGEPTERQVADAWLAAMEDVLKVVEQSEIPELNEYQCGTYEMHSLEQAQDIARNIIAAGVSVNRNDDLKLSDEILGNL.

Fe cation-binding residues include His54, His58, and Cys128.

It belongs to the LuxS family. In terms of assembly, homodimer. The cofactor is Fe cation.

It carries out the reaction S-(5-deoxy-D-ribos-5-yl)-L-homocysteine = (S)-4,5-dihydroxypentane-2,3-dione + L-homocysteine. Functionally, involved in the synthesis of autoinducer 2 (AI-2) which is secreted by bacteria and is used to communicate both the cell density and the metabolic potential of the environment. The regulation of gene expression in response to changes in cell density is called quorum sensing. Catalyzes the transformation of S-ribosylhomocysteine (RHC) to homocysteine (HC) and 4,5-dihydroxy-2,3-pentadione (DPD). The protein is S-ribosylhomocysteine lyase of Shewanella baltica (strain OS223).